Consider the following 420-residue polypeptide: D-inositol 3-phosphate glycosyltransferase (420 aa).

Position 13 (His-13) interacts with 1D-myo-inositol 3-phosphate. Residues 19–20 and Gly-27 contribute to the UDP-N-acetyl-alpha-D-glucosamine site; that span reads QP. Residues 24-29, Lys-82, Tyr-115, Thr-139, and Arg-159 contribute to the 1D-myo-inositol 3-phosphate site; that span reads DAGGMN. UDP-N-acetyl-alpha-D-glucosamine is bound by residues Arg-233, Lys-238, and Val-294. Mg(2+) is bound by residues Phe-303, Arg-304, and Ala-306. UDP-N-acetyl-alpha-D-glucosamine contacts are provided by Glu-316 and Glu-324. Thr-330 is a Mg(2+) binding site.

This sequence belongs to the glycosyltransferase group 1 family. MshA subfamily. Homodimer.

It carries out the reaction 1D-myo-inositol 3-phosphate + UDP-N-acetyl-alpha-D-glucosamine = 1D-myo-inositol 2-acetamido-2-deoxy-alpha-D-glucopyranoside 3-phosphate + UDP + H(+). Catalyzes the transfer of a N-acetyl-glucosamine moiety to 1D-myo-inositol 3-phosphate to produce 1D-myo-inositol 2-acetamido-2-deoxy-glucopyranoside 3-phosphate in the mycothiol biosynthesis pathway. This is D-inositol 3-phosphate glycosyltransferase from Pseudarthrobacter chlorophenolicus (strain ATCC 700700 / DSM 12829 / CIP 107037 / JCM 12360 / KCTC 9906 / NCIMB 13794 / A6) (Arthrobacter chlorophenolicus).